The primary structure comprises 196 residues: Phosphoheptose isomerase (196 aa).

An SIS domain is found at Leu-35 to Gln-194. Asn-50 to Gly-52 contacts substrate. Positions 59 and 63 each coordinate Zn(2+). Substrate is bound by residues Glu-63, Asn-92 to Asp-93, Ser-118 to Ser-120, Ser-123, and Gln-170. The Zn(2+) site is built by Gln-170 and His-178.

The protein belongs to the SIS family. GmhA subfamily. Homotetramer. The cofactor is Zn(2+).

It localises to the cytoplasm. It carries out the reaction 2 D-sedoheptulose 7-phosphate = D-glycero-alpha-D-manno-heptose 7-phosphate + D-glycero-beta-D-manno-heptose 7-phosphate. Its pathway is carbohydrate biosynthesis; D-glycero-D-manno-heptose 7-phosphate biosynthesis; D-glycero-alpha-D-manno-heptose 7-phosphate and D-glycero-beta-D-manno-heptose 7-phosphate from sedoheptulose 7-phosphate: step 1/1. Catalyzes the isomerization of sedoheptulose 7-phosphate in D-glycero-D-manno-heptose 7-phosphate. This chain is Phosphoheptose isomerase, found in Syntrophotalea carbinolica (strain DSM 2380 / NBRC 103641 / GraBd1) (Pelobacter carbinolicus).